We begin with the raw amino-acid sequence, 195 residues long: Imidazoleglycerol-phosphate dehydratase (195 aa).

It belongs to the imidazoleglycerol-phosphate dehydratase family.

Its subcellular location is the cytoplasm. It carries out the reaction D-erythro-1-(imidazol-4-yl)glycerol 3-phosphate = 3-(imidazol-4-yl)-2-oxopropyl phosphate + H2O. It functions in the pathway amino-acid biosynthesis; L-histidine biosynthesis; L-histidine from 5-phospho-alpha-D-ribose 1-diphosphate: step 6/9. This chain is Imidazoleglycerol-phosphate dehydratase, found in Endomicrobium trichonymphae.